We begin with the raw amino-acid sequence, 689 residues long: Glycine--tRNA ligase beta subunit (689 aa).

This sequence belongs to the class-II aminoacyl-tRNA synthetase family. Tetramer of two alpha and two beta subunits.

The protein localises to the cytoplasm. It catalyses the reaction tRNA(Gly) + glycine + ATP = glycyl-tRNA(Gly) + AMP + diphosphate. This chain is Glycine--tRNA ligase beta subunit, found in Dictyoglomus turgidum (strain DSM 6724 / Z-1310).